We begin with the raw amino-acid sequence, 284 residues long: Para-Rep C3 (284 aa).

Residues Thr-3 to Tyr-98 enclose the CRESS-DNA virus Rep endonuclease domain. Residues Val-10–Leu-13 carry the RCR-1 motif. The a divalent metal cation site is built by Glu-36 and His-42. An RCR-2 motif is present at residues His-42–Gln-44. The Nuclear localization signal motif lies at Ala-51–Arg-71. The active-site For DNA cleavage activity is Tyr-81. The RCR-3 motif lies at Tyr-81–Lys-84. Asp-86 contributes to the a divalent metal cation binding site. The short motif at Tyr-98–His-104 is the Nuclear localization signal element. Gly-174 to Ser-182 is a binding site for ATP.

Belongs to the nanoviridea/circoviridae replication-associated protein family. As to quaternary structure, homooligomer (Potential). Rep binds to repeated DNA motifs (iterons). The cofactor is Mg(2+). It depends on Mn(2+) as a cofactor.

It localises to the host nucleus. The catalysed reaction is ATP + H2O = ADP + phosphate + H(+). Its function is as follows. Initiates and terminates the replication only of its own subviral DNA molecule. The closed circular ssDNA genome is first converted to a superhelical dsDNA. Rep binds a specific hairpin at the genome origin of replication. Introduces an endonucleolytic nick within the intergenic region of the genome, thereby initiating the rolling circle replication (RCR). Following cleavage, binds covalently to the 5'-phosphate of DNA as a tyrosyl ester. The cleavage gives rise to a free 3'-OH that serves as a primer for the cellular DNA polymerase. The polymerase synthesizes the (+) strand DNA by rolling circle mechanism. After one round of replication, a Rep-catalyzed nucleotidyl transfer reaction releases a circular single-stranded virus genome, thereby terminating the replication. Displays origin-specific DNA cleavage, nucleotidyl transferase, ATPase and helicase activities. The protein is Para-Rep C3 (C3) of Milk vetch dwarf C3 alphasatellite (MVDC3A).